A 240-amino-acid chain; its full sequence is Ribonuclease 3 (240 aa).

The RNase III domain occupies 9–141 (VEELQKRLGV…LLAALYLDQG (133 aa)). Glutamate 54 contacts Mg(2+). The active site involves aspartate 58. Mg(2+) is bound by residues aspartate 127 and glutamate 130. Residue glutamate 130 is part of the active site. Residues 168-237 (DYKTALQEIV…ARKAYEKLVA (70 aa)) form the DRBM domain.

The protein belongs to the ribonuclease III family. Homodimer. Requires Mg(2+) as cofactor.

It localises to the cytoplasm. It catalyses the reaction Endonucleolytic cleavage to 5'-phosphomonoester.. Digests double-stranded RNA. Involved in the processing of primary rRNA transcript to yield the immediate precursors to the large and small rRNAs (23S and 16S). Processes some mRNAs, and tRNAs when they are encoded in the rRNA operon. Processes pre-crRNA and tracrRNA of type II CRISPR loci if present in the organism. This is Ribonuclease 3 from Thermotoga neapolitana (strain ATCC 49049 / DSM 4359 / NBRC 107923 / NS-E).